Consider the following 207-residue polypeptide: Large ribosomal subunit protein bL25 (207 aa).

The disordered stretch occupies residues aspartate 185–serine 207.

This sequence belongs to the bacterial ribosomal protein bL25 family. CTC subfamily. In terms of assembly, part of the 50S ribosomal subunit; part of the 5S rRNA/L5/L18/L25 subcomplex. Contacts the 5S rRNA. Binds to the 5S rRNA independently of L5 and L18.

In terms of biological role, this is one of the proteins that binds to the 5S RNA in the ribosome where it forms part of the central protuberance. This Rhodococcus jostii (strain RHA1) protein is Large ribosomal subunit protein bL25.